The chain runs to 967 residues: Isoleucine--tRNA ligase 2 (967 aa).

A 'HIGH' region motif is present at residues 58–68 (PYANGDIHIGH). The span at 437-446 (AVTEEAGATG) shows a compositional bias: low complexity. Positions 437 to 466 (AVTEEAGATGEARKVGKAEEAEEAGPAKTL) are disordered. Residue Glu-598 coordinates L-isoleucyl-5'-AMP. The 'KMSKS' region motif lies at 639–643 (KMSKS). ATP is bound at residue Lys-642. Zn(2+)-binding residues include Cys-922, Cys-925, Cys-942, and Cys-945.

It belongs to the class-I aminoacyl-tRNA synthetase family. IleS type 1 subfamily. Monomer. Zn(2+) serves as cofactor.

It is found in the cytoplasm. The catalysed reaction is tRNA(Ile) + L-isoleucine + ATP = L-isoleucyl-tRNA(Ile) + AMP + diphosphate. Its function is as follows. Catalyzes the attachment of isoleucine to tRNA(Ile). As IleRS can inadvertently accommodate and process structurally similar amino acids such as valine, to avoid such errors it has two additional distinct tRNA(Ile)-dependent editing activities. One activity is designated as 'pretransfer' editing and involves the hydrolysis of activated Val-AMP. The other activity is designated 'posttransfer' editing and involves deacylation of mischarged Val-tRNA(Ile). The chain is Isoleucine--tRNA ligase 2 from Burkholderia mallei (strain ATCC 23344).